The following is a 173-amino-acid chain: Coordinator of PRMT5 and differentiation stimulator (173 aa).

The residue at position 1 (methionine 1) is an N-acetylmethionine. The disordered stretch occupies residues 1–70 (MDPQAATGRG…EGPSSEEEGF (70 aa)). 2 positions are modified to phosphoserine: serine 64 and serine 65.

As to quaternary structure, interacts with PRMT5. Interacts with histone H4; specifically interacts with the N-terminus of histone H4 but not with histone H3. Interacts with CBFB. Found in a complex with PRMT5, RUNX1 and CBFB.

Its subcellular location is the nucleus. Histone-binding protein required for histone H4 methyltransferase activity of PRMT5. Specifically required for histone H4 'Arg-3' methylation mediated by PRMT5, but not histone H3 'Arg-8' methylation, suggesting that it modulates the substrate specificity of PRMT5. Specifically interacts with the N-terminus of histone H4 but not with histone H3, suggesting that it acts by promoting the association between histone H4 and PRMT5. Involved in CCNE1 promoter repression. Plays a role in muscle cell differentiation by modulating the recruitment of PRMT5 to the promoter of genes involved in the coordination between cell cycle exit and muscle differentiation. The protein is Coordinator of PRMT5 and differentiation stimulator (Coprs) of Mus musculus (Mouse).